The primary structure comprises 198 residues: Small ribosomal subunit protein eS1 (198 aa).

This sequence belongs to the eukaryotic ribosomal protein eS1 family.

This is Small ribosomal subunit protein eS1 from Methanosphaerula palustris (strain ATCC BAA-1556 / DSM 19958 / E1-9c).